Here is a 94-residue protein sequence, read N- to C-terminus: Co-chaperonin GroES (94 aa).

It belongs to the GroES chaperonin family. Heptamer of 7 subunits arranged in a ring. Interacts with the chaperonin GroEL.

It is found in the cytoplasm. In terms of biological role, together with the chaperonin GroEL, plays an essential role in assisting protein folding. The GroEL-GroES system forms a nano-cage that allows encapsulation of the non-native substrate proteins and provides a physical environment optimized to promote and accelerate protein folding. GroES binds to the apical surface of the GroEL ring, thereby capping the opening of the GroEL channel. The polypeptide is Co-chaperonin GroES (Streptococcus pneumoniae (strain CGSP14)).